The sequence spans 103 residues: Small ribosomal subunit protein uS10 (103 aa).

Belongs to the universal ribosomal protein uS10 family. In terms of assembly, part of the 30S ribosomal subunit.

Involved in the binding of tRNA to the ribosomes. In Neisseria meningitidis serogroup C / serotype 2a (strain ATCC 700532 / DSM 15464 / FAM18), this protein is Small ribosomal subunit protein uS10.